A 164-amino-acid polypeptide reads, in one-letter code: 4-hydroxy-4-methyl-2-oxoglutarate aldolase (164 aa).

Substrate is bound by residues 74–77 (GGNL) and Arg96. Asp97 contributes to the a divalent metal cation binding site.

It belongs to the class II aldolase/RraA-like family. As to quaternary structure, homotrimer. Requires Ni(2+) as cofactor. Co(2+) is required as a cofactor. It depends on Zn(2+) as a cofactor.

The enzyme catalyses 4-hydroxy-4-methyl-2-oxoglutarate = 2 pyruvate. It carries out the reaction oxaloacetate + H(+) = pyruvate + CO2. With respect to regulation, competitively inhibited by oxalate, a pyruvate enolate analog. Its function is as follows. Catalyzes the aldol cleavage of 4-hydroxy-4-methyl-2-oxoglutarate (HMG) into 2 molecules of pyruvate. Also contains a secondary oxaloacetate (OAA) decarboxylase activity due to the common pyruvate enolate transition state formed following C-C bond cleavage in the retro-aldol and decarboxylation reactions. The polypeptide is 4-hydroxy-4-methyl-2-oxoglutarate aldolase (Thermus thermophilus (strain ATCC 27634 / DSM 579 / HB8)).